A 226-amino-acid chain; its full sequence is Gap junction beta-2 protein (226 aa).

Residues 2 to 13 (DWGTLQTILGGV) lie within the membrane without spanning it. Residues 14 to 20 (NKHSTSI) are Cytoplasmic-facing. The helical transmembrane segment at 21–40 (GKIWLTVLFIFRIMILVVAA) threads the bilayer. The Extracellular portion of the chain corresponds to 41–73 (KEVWGDEQADFVCNTLQPGCKNVCYDHYFPISH). Residues Glu42, Gly45, and Glu47 each contribute to the Ca(2+) site. 3 disulfides stabilise this stretch: Cys53–Cys180, Cys60–Cys174, and Cys64–Cys169. A helical transmembrane segment spans residues 74–94 (IRLWALQLIFVSTPALLVAMH). At 95 to 135 (VAYRRHEKKRKFIKGEIKSEFKDIEEIKTQKVRIEGSLWWT) the chain is on the cytoplasmic side. Residues 136–156 (YTSSIFFRVIFEAAFMYVFYV) traverse the membrane as a helical segment. The Extracellular segment spans residues 157 to 189 (MYDGFSMQRLVKCNAWPCPNTVDCFVSRPTEKT). The chain crosses the membrane as a helical span at residues 190 to 210 (VFTVFMIAVSGICILLNVTEL). Topologically, residues 211-226 (CYLLIRYCSGKSKKPV) are cytoplasmic.

It belongs to the connexin family. Beta-type (group I) subfamily. As to quaternary structure, a hemichannel or connexon is composed of a hexamer of connexins. A functional gap junction is formed by the apposition of two hemichannels. Forms heteromeric channels with GJB4. Interacts with CNST.

Its subcellular location is the cell membrane. The protein resides in the cell junction. It localises to the gap junction. Its function is as follows. Structural component of gap junctions. Gap junctions are dodecameric channels that connect the cytoplasm of adjoining cells. They are formed by the docking of two hexameric hemichannels, one from each cell membrane. Small molecules and ions diffuse from one cell to a neighboring cell via the central pore. This chain is Gap junction beta-2 protein (GJB2), found in Gorilla gorilla gorilla (Western lowland gorilla).